The chain runs to 299 residues: Oxygen-dependent coproporphyrinogen-III oxidase (299 aa).

Ser-92 contacts substrate. Mn(2+) is bound by residues His-96 and His-106. The active-site Proton donor is the His-106. 108–110 (NVR) serves as a coordination point for substrate. Residues His-145 and His-175 each contribute to the Mn(2+) site. Residues 240–275 (YVEFNLVWDRGTLFGLQTGGRTESILMSMPPLVRWE) form an important for dimerization region. Substrate is bound at residue 258-260 (GGR).

This sequence belongs to the aerobic coproporphyrinogen-III oxidase family. Homodimer. The cofactor is Mn(2+).

It is found in the cytoplasm. The catalysed reaction is coproporphyrinogen III + O2 + 2 H(+) = protoporphyrinogen IX + 2 CO2 + 2 H2O. Its pathway is porphyrin-containing compound metabolism; protoporphyrin-IX biosynthesis; protoporphyrinogen-IX from coproporphyrinogen-III (O2 route): step 1/1. Functionally, involved in the heme biosynthesis. Catalyzes the aerobic oxidative decarboxylation of propionate groups of rings A and B of coproporphyrinogen-III to yield the vinyl groups in protoporphyrinogen-IX. This chain is Oxygen-dependent coproporphyrinogen-III oxidase, found in Escherichia coli O157:H7.